Here is a 424-residue protein sequence, read N- to C-terminus: Adenylosuccinate synthetase (424 aa).

GTP-binding positions include 12 to 18 (GDEGKGK) and 40 to 42 (GHT). The active-site Proton acceptor is the aspartate 13. Residues aspartate 13 and glycine 40 each coordinate Mg(2+). Residues 13-16 (DEGK), 38-41 (NAGH), threonine 130, arginine 144, asparagine 220, threonine 235, and arginine 299 contribute to the IMP site. Catalysis depends on histidine 41, which acts as the Proton donor. Substrate is bound at residue 295–301 (VTTGRRR). Residues arginine 301, 327 to 329 (KLD), and 412 to 414 (GTG) each bind GTP.

It belongs to the adenylosuccinate synthetase family. In terms of assembly, homodimer. The cofactor is Mg(2+).

The protein localises to the cytoplasm. It carries out the reaction IMP + L-aspartate + GTP = N(6)-(1,2-dicarboxyethyl)-AMP + GDP + phosphate + 2 H(+). The protein operates within purine metabolism; AMP biosynthesis via de novo pathway; AMP from IMP: step 1/2. Plays an important role in the de novo pathway and in the salvage pathway of purine nucleotide biosynthesis. Catalyzes the first committed step in the biosynthesis of AMP from IMP. This Aspergillus flavus (strain ATCC 200026 / FGSC A1120 / IAM 13836 / NRRL 3357 / JCM 12722 / SRRC 167) protein is Adenylosuccinate synthetase.